The chain runs to 424 residues: Multifunctional CCA protein (424 aa).

The ATP site is built by glycine 8 and arginine 11. Residues glycine 8 and arginine 11 each contribute to the CTP site. The Mg(2+) site is built by aspartate 21 and aspartate 23. The ATP site is built by arginine 91, arginine 149, and arginine 152. CTP contacts are provided by arginine 91, arginine 149, and arginine 152. In terms of domain architecture, HD spans 238 to 339 (TGIHLMMVLD…VRLLERCDAF (102 aa)).

Belongs to the tRNA nucleotidyltransferase/poly(A) polymerase family. Bacterial CCA-adding enzyme type 1 subfamily. In terms of assembly, monomer. Can also form homodimers and oligomers. Mg(2+) serves as cofactor. Requires Ni(2+) as cofactor.

It carries out the reaction a tRNA precursor + 2 CTP + ATP = a tRNA with a 3' CCA end + 3 diphosphate. The catalysed reaction is a tRNA with a 3' CCA end + 2 CTP + ATP = a tRNA with a 3' CCACCA end + 3 diphosphate. Functionally, catalyzes the addition and repair of the essential 3'-terminal CCA sequence in tRNAs without using a nucleic acid template. Adds these three nucleotides in the order of C, C, and A to the tRNA nucleotide-73, using CTP and ATP as substrates and producing inorganic pyrophosphate. tRNA 3'-terminal CCA addition is required both for tRNA processing and repair. Also involved in tRNA surveillance by mediating tandem CCA addition to generate a CCACCA at the 3' terminus of unstable tRNAs. While stable tRNAs receive only 3'-terminal CCA, unstable tRNAs are marked with CCACCA and rapidly degraded. This chain is Multifunctional CCA protein, found in Polaromonas naphthalenivorans (strain CJ2).